A 159-amino-acid chain; its full sequence is Ribonuclease H (159 aa).

The RNase H type-1 domain maps to 2–144 (SQDPVIIHTD…ADELATRGLQ (143 aa)). Mg(2+) contacts are provided by Asp-11, Glu-50, Asp-72, and Asp-136.

Belongs to the RNase H family. Monomer. Mg(2+) is required as a cofactor.

It localises to the cytoplasm. It carries out the reaction Endonucleolytic cleavage to 5'-phosphomonoester.. Its function is as follows. Endonuclease that specifically degrades the RNA of RNA-DNA hybrids. The sequence is that of Ribonuclease H from Mycolicibacterium smegmatis (strain ATCC 700084 / mc(2)155) (Mycobacterium smegmatis).